Here is a 362-residue protein sequence, read N- to C-terminus: Histidinol-phosphate aminotransferase (362 aa).

K218 carries the N6-(pyridoxal phosphate)lysine modification.

Belongs to the class-II pyridoxal-phosphate-dependent aminotransferase family. Histidinol-phosphate aminotransferase subfamily. As to quaternary structure, homodimer. Pyridoxal 5'-phosphate serves as cofactor.

It catalyses the reaction L-histidinol phosphate + 2-oxoglutarate = 3-(imidazol-4-yl)-2-oxopropyl phosphate + L-glutamate. The protein operates within amino-acid biosynthesis; L-histidine biosynthesis; L-histidine from 5-phospho-alpha-D-ribose 1-diphosphate: step 7/9. The chain is Histidinol-phosphate aminotransferase from Xanthomonas campestris pv. campestris (strain ATCC 33913 / DSM 3586 / NCPPB 528 / LMG 568 / P 25).